The following is a 557-amino-acid chain: Protein NRT1/ PTR FAMILY 2.6 (557 aa).

12 helical membrane-spanning segments follow: residues 26-46 (ITFPFMIVTLFGLTLATLGWL), 67-87 (ILNIFSGFTFMFPAIGAIAAD), 89-109 (FFGTIPVILVSSFISLVGVVL), 136-156 (NIQLGVLYTAITLGCVGAGGL), 177-197 (FFNWFFFTWYLAASISATAIV), 203-223 (ISWSFGFGLCVAANLLGLIVF), 318-338 (IIPLVLAILFLSTPIAMQLGL), 356-376 (IPAGSLQVITLLSTCLFIIVN), 398-418 (VGIGHVFNILSMAVTAIVEAK), 439-459 (VLWLFPPLVIVGIGEAFHFPG), 478-498 (SITSVLIGICFYTSTALIDLI), and 518-538 (YWILVIGGVLNLGYFLVCSWF).

The protein belongs to the major facilitator superfamily. Proton-dependent oligopeptide transporter (POT/PTR) (TC 2.A.17) family. As to expression, expressed in roots.

It is found in the membrane. In terms of biological role, transporter involved in a passive nitrate efflux. This Arabidopsis thaliana (Mouse-ear cress) protein is Protein NRT1/ PTR FAMILY 2.6 (NPF2.6).